The chain runs to 445 residues: Scarecrow-like protein 18 (445 aa).

Over residues 1–21 the composition is skewed to low complexity; sequence MLTSFKSSSSSSEDATATTTE. A disordered region spans residues 1–26; the sequence is MLTSFKSSSSSSEDATATTTENPPPL. The region spanning 32–445 is the GRAS domain; sequence SAATSASHHL…RPLFSVSSWK (414 aa). The segment at 39–127 is leucine repeat I (LRI); that stretch reads HHLRRLLFTA…STVFTSSVCK (89 aa). The VHIID stretch occupies residues 146-217; sequence YLWLNQLTPF…SPPPSLRITG (72 aa). The VHIID motif lies at 179–183; sequence LHILD. The interval 227–259 is leucine repeat II (LRII); the sequence is RTGDRLTRFADSLGLQFQFHTLVIVEEDLAGLL. The interval 275–366 is PFYRE; that stretch reads IAVNCVHFLH…QRWFGKEILD (92 aa). Residues 369–445 form an SAW region; the sequence is AAEETERKQR…RPLFSVSSWK (77 aa).

This sequence belongs to the GRAS family. In terms of tissue distribution, expressed in roots and flowers.

The protein localises to the nucleus. In terms of biological role, probable transcription factor required for axillary (lateral) shoot meristem formation during vegetative development. Seems to act upstream of REVOLUTA. This Arabidopsis thaliana (Mouse-ear cress) protein is Scarecrow-like protein 18 (SCL18).